We begin with the raw amino-acid sequence, 365 residues long: Cytoplasmic tRNA 2-thiolation protein 1 (365 aa).

Belongs to the TtcA family. CTU1/NCS6/ATPBD3 subfamily.

It localises to the cytoplasm. The protein operates within tRNA modification; 5-methoxycarbonylmethyl-2-thiouridine-tRNA biosynthesis. Plays a central role in 2-thiolation of mcm(5)S(2)U at tRNA wobble positions of tRNA(Lys), tRNA(Glu) and tRNA(Gln). Directly binds tRNAs and probably acts by catalyzing adenylation of tRNAs, an intermediate required for 2-thiolation. It is unclear whether it acts as a sulfurtransferase that transfers sulfur from thiocarboxylated URM1 onto the uridine of tRNAs at wobble position. Prior mcm(5) tRNA modification by the elongator complex is required for 2-thiolation. May also be involved in protein urmylation. This is Cytoplasmic tRNA 2-thiolation protein 1 from Yarrowia lipolytica (strain CLIB 122 / E 150) (Yeast).